A 374-amino-acid polypeptide reads, in one-letter code: Erythronate-4-phosphate dehydrogenase (374 aa).

2 residues coordinate substrate: Ser53 and Thr75. Asp160 is a binding site for NAD(+). Residue Arg222 is part of the active site. Asp246 is a binding site for NAD(+). Glu251 is an active-site residue. The active-site Proton donor is His268. Gly271 is an NAD(+) binding site. Substrate is bound at residue Tyr272.

It belongs to the D-isomer specific 2-hydroxyacid dehydrogenase family. PdxB subfamily. In terms of assembly, homodimer.

It is found in the cytoplasm. It carries out the reaction 4-phospho-D-erythronate + NAD(+) = (R)-3-hydroxy-2-oxo-4-phosphooxybutanoate + NADH + H(+). The protein operates within cofactor biosynthesis; pyridoxine 5'-phosphate biosynthesis; pyridoxine 5'-phosphate from D-erythrose 4-phosphate: step 2/5. In terms of biological role, catalyzes the oxidation of erythronate-4-phosphate to 3-hydroxy-2-oxo-4-phosphonooxybutanoate. This is Erythronate-4-phosphate dehydrogenase from Psychrobacter sp. (strain PRwf-1).